The chain runs to 408 residues: (R)-2-hydroxyisocaproyl-CoA dehydratase alpha subunit (408 aa).

Glu-55 contributes to the substrate binding site. [4Fe-4S] cluster contacts are provided by Cys-84, Cys-117, and Cys-346.

It belongs to the FldB/FldC dehydratase alpha/beta subunit family. In terms of assembly, part of the heterodimeric complex HadBC composed of (R)-2-hydroxyisocaproyl-CoA dehydratase alpha (HadB) and beta (HadC) subunit. [4Fe-4S] cluster serves as cofactor.

The enzyme catalyses (R)-2-hydroxy-4-methylpentanoyl-CoA = 4-methylpent-2-enoyl-CoA + H2O. Activated by HadI. In terms of biological role, involved in the reductive branch of L-leucine fermentation. Catalyzes the irreversible beta/alpha-elimination of water from (R)-2-hydroxyisocaproyl-CoA to yield isocaprenoyl-CoA. This beta/alpha-dehydration depends on the reductive formation of ketyl radicals on the substrate generated by injection of a single electron from the ATP-dependent activator protein HadI. The enzyme is specific for the R-isomer. This chain is (R)-2-hydroxyisocaproyl-CoA dehydratase alpha subunit, found in Clostridioides difficile (Peptoclostridium difficile).